Consider the following 450-residue polypeptide: tRNA modification GTPase MnmE (450 aa).

Arginine 23, glutamate 79, and lysine 118 together coordinate (6S)-5-formyl-5,6,7,8-tetrahydrofolate. Positions glycine 214–glycine 374 constitute a TrmE-type G domain. K(+) is bound at residue asparagine 224. Residues asparagine 224–serine 229, threonine 243–threonine 249, and aspartate 268–glycine 271 each bind GTP. Serine 228 contacts Mg(2+). 3 residues coordinate K(+): threonine 243, isoleucine 245, and threonine 248. Threonine 249 contributes to the Mg(2+) binding site. Lysine 450 contributes to the (6S)-5-formyl-5,6,7,8-tetrahydrofolate binding site.

It belongs to the TRAFAC class TrmE-Era-EngA-EngB-Septin-like GTPase superfamily. TrmE GTPase family. In terms of assembly, homodimer. Heterotetramer of two MnmE and two MnmG subunits. K(+) serves as cofactor.

It is found in the cytoplasm. In terms of biological role, exhibits a very high intrinsic GTPase hydrolysis rate. Involved in the addition of a carboxymethylaminomethyl (cmnm) group at the wobble position (U34) of certain tRNAs, forming tRNA-cmnm(5)s(2)U34. The chain is tRNA modification GTPase MnmE from Francisella tularensis subsp. tularensis (strain FSC 198).